A 609-amino-acid polypeptide reads, in one-letter code: Protein KINESIN LIGHT CHAIN-RELATED 1 (609 aa).

The interval 1 to 77 is disordered; the sequence is MPAMPGLVSV…TAAVIDVDDP (77 aa). Positions 38–55 are enriched in low complexity; the sequence is KKTPSSTPSRSKPSPNRS. 10 TPR repeats span residues 140–173, 183–216, 225–258, 267–301, 307–340, 349–382, 392–425, 433–466, 474–507, and 516–549; these read AMSLHVLAAIYCSLGRFDEAVPPLERAIQVPDPT, FSGHMQLGDTLSMLGQIDRSIACYEEGLKIQIQT, GETCRYLAEAYVQAMQFNKAEELCKKTLEIHRAH, AADRRLMAIICEAKGDYENALEHLVLASMAMIASG, ASIDVSIGNIYMSLCRFDEAVFSYQKALTVFKAS, ASVFVRLAELYHRTGKLRESKSYCENALRIYNKP, AGGLTEISAIYESVDEPEEALKLLQKSMKLLEDK, AGLEARMGVMYYTVGRYEDARNAFESAVTKLRAA, GVVLNQMGLACVQLFKIDEAGELFEEARGILEQE, and LGVYSNLAATYDAMGRIEDAIEILEQVLKLREEK. The tract at residues 582–609 is disordered; it reads LQNLIDPNARPPKKESSAKKWPSLGFKF.

The protein belongs to the kinesin light chain family. In terms of assembly, interacts with IQD1.

It localises to the cytoplasm. Its subcellular location is the cytoskeleton. This Arabidopsis thaliana (Mouse-ear cress) protein is Protein KINESIN LIGHT CHAIN-RELATED 1.